We begin with the raw amino-acid sequence, 267 residues long: Undecaprenyl-diphosphatase (267 aa).

The next 8 helical transmembrane spans lie at 1–21 (MSYF…FLPI), 39–59 (QGLA…VIYF), 83–103 (AKLA…GLLM), 111–131 (LRSA…LWWV), 144–164 (AGWK…IPGT), 189–209 (FLMS…KLVT), 218–238 (TLLT…HFFL), and 246–266 (MTPF…FLMM).

It belongs to the UppP family.

The protein resides in the cell inner membrane. The enzyme catalyses di-trans,octa-cis-undecaprenyl diphosphate + H2O = di-trans,octa-cis-undecaprenyl phosphate + phosphate + H(+). Catalyzes the dephosphorylation of undecaprenyl diphosphate (UPP). Confers resistance to bacitracin. In Vibrio atlanticus (strain LGP32) (Vibrio splendidus (strain Mel32)), this protein is Undecaprenyl-diphosphatase.